Reading from the N-terminus, the 370-residue chain is Cobalt-precorrin-5B C(1)-methyltransferase (370 aa).

The protein belongs to the CbiD family.

The catalysed reaction is Co-precorrin-5B + S-adenosyl-L-methionine = Co-precorrin-6A + S-adenosyl-L-homocysteine. It functions in the pathway cofactor biosynthesis; adenosylcobalamin biosynthesis; cob(II)yrinate a,c-diamide from sirohydrochlorin (anaerobic route): step 6/10. In terms of biological role, catalyzes the methylation of C-1 in cobalt-precorrin-5B to form cobalt-precorrin-6A. The chain is Cobalt-precorrin-5B C(1)-methyltransferase from Prochlorococcus marinus (strain MIT 9215).